The chain runs to 303 residues: tRNA-cytidine(32) 2-sulfurtransferase (303 aa).

The short motif at 49–54 (SGGKDS) is the PP-loop motif element. [4Fe-4S] cluster-binding residues include Cys124, Cys127, and Cys215.

The protein belongs to the TtcA family. As to quaternary structure, homodimer. The cofactor is Mg(2+). [4Fe-4S] cluster is required as a cofactor.

It localises to the cytoplasm. The catalysed reaction is cytidine(32) in tRNA + S-sulfanyl-L-cysteinyl-[cysteine desulfurase] + AH2 + ATP = 2-thiocytidine(32) in tRNA + L-cysteinyl-[cysteine desulfurase] + A + AMP + diphosphate + H(+). It functions in the pathway tRNA modification. In terms of biological role, catalyzes the ATP-dependent 2-thiolation of cytidine in position 32 of tRNA, to form 2-thiocytidine (s(2)C32). The sulfur atoms are provided by the cysteine/cysteine desulfurase (IscS) system. The chain is tRNA-cytidine(32) 2-sulfurtransferase from Anaeromyxobacter sp. (strain Fw109-5).